Reading from the N-terminus, the 194-residue chain is FMN-dependent NADH:quinone oxidoreductase (194 aa).

FMN contacts are provided by residues Ser-10 and 90-93 (MYNL).

It belongs to the azoreductase type 1 family. Homodimer. FMN is required as a cofactor.

The enzyme catalyses 2 a quinone + NADH + H(+) = 2 a 1,4-benzosemiquinone + NAD(+). The catalysed reaction is N,N-dimethyl-1,4-phenylenediamine + anthranilate + 2 NAD(+) = 2-(4-dimethylaminophenyl)diazenylbenzoate + 2 NADH + 2 H(+). Functionally, quinone reductase that provides resistance to thiol-specific stress caused by electrophilic quinones. Its function is as follows. Also exhibits azoreductase activity. Catalyzes the reductive cleavage of the azo bond in aromatic azo compounds to the corresponding amines. The protein is FMN-dependent NADH:quinone oxidoreductase of Haemophilus influenzae (strain PittEE).